The sequence spans 655 residues: Serine/threonine-protein kinase SKM1 (655 aa).

Residues 3–118 (GVKKEGWISY…WLDAIFAKCP (116 aa)) enclose the PH domain. In terms of domain architecture, CRIB spans 123 to 136 (VSSPTNFTHKVHVG). Basic and acidic residues-rich tracts occupy residues 265–276 (EEGRVHVSKEST) and 318–327 (KNHDSKTKWH). The segment at 265–327 (EEGRVHVSKE…KNHDSKTKWH (63 aa)) is disordered. One can recognise a Protein kinase domain in the interval 360–639 (FQLVEKAGQG…VRKLLTFEFL (280 aa)). Residues 366 to 374 (AGQGASGAV) and lysine 406 contribute to the ATP site. Residue aspartate 507 is the Proton acceptor of the active site.

It belongs to the protein kinase superfamily. STE Ser/Thr protein kinase family. STE20 subfamily.

It catalyses the reaction L-seryl-[protein] + ATP = O-phospho-L-seryl-[protein] + ADP + H(+). The catalysed reaction is L-threonyl-[protein] + ATP = O-phospho-L-threonyl-[protein] + ADP + H(+). May be involved in cellular signaling or cytoskeletal functions. May play a role in morphogenetic control. In Saccharomyces cerevisiae (strain ATCC 204508 / S288c) (Baker's yeast), this protein is Serine/threonine-protein kinase SKM1 (SKM1).